Reading from the N-terminus, the 100-residue chain is Urease subunit gamma (100 aa).

This sequence belongs to the urease gamma subunit family. In terms of assembly, heterotrimer of UreA (gamma), UreB (beta) and UreC (alpha) subunits. Three heterotrimers associate to form the active enzyme.

The protein resides in the cytoplasm. The enzyme catalyses urea + 2 H2O + H(+) = hydrogencarbonate + 2 NH4(+). It functions in the pathway nitrogen metabolism; urea degradation; CO(2) and NH(3) from urea (urease route): step 1/1. This chain is Urease subunit gamma, found in Mycobacteroides abscessus (strain ATCC 19977 / DSM 44196 / CCUG 20993 / CIP 104536 / JCM 13569 / NCTC 13031 / TMC 1543 / L948) (Mycobacterium abscessus).